We begin with the raw amino-acid sequence, 212 residues long: Methylthioribulose-1-phosphate dehydratase (212 aa).

H97 and H99 together coordinate Zn(2+).

This sequence belongs to the aldolase class II family. MtnB subfamily. In terms of assembly, homotetramer. Zn(2+) is required as a cofactor.

It carries out the reaction 5-(methylsulfanyl)-D-ribulose 1-phosphate = 5-methylsulfanyl-2,3-dioxopentyl phosphate + H2O. It participates in amino-acid biosynthesis; L-methionine biosynthesis via salvage pathway; L-methionine from S-methyl-5-thio-alpha-D-ribose 1-phosphate: step 2/6. Its function is as follows. Catalyzes the dehydration of methylthioribulose-1-phosphate (MTRu-1-P) into 2,3-diketo-5-methylthiopentyl-1-phosphate (DK-MTP-1-P). The sequence is that of Methylthioribulose-1-phosphate dehydratase from Bacillus cereus (strain AH187).